A 179-amino-acid chain; its full sequence is MSRIGKLPIEIPKGVKISYTDSNLQVVGPKGTLSRTIMSGVTIEMTENHISVSRDDDGIKSRSAHGLTRTLINNMVTGVTKGFETALEINGVGYRAELKGDVLNLSLGYSHPINFSLPKGINVEVDKMTKILVKGVDKELVGQTAAKIRDFRGPEPYKGKGVKYADETILRKAGKTGKK.

The protein belongs to the universal ribosomal protein uL6 family. In terms of assembly, part of the 50S ribosomal subunit.

In terms of biological role, this protein binds to the 23S rRNA, and is important in its secondary structure. It is located near the subunit interface in the base of the L7/L12 stalk, and near the tRNA binding site of the peptidyltransferase center. This is Large ribosomal subunit protein uL6 from Geotalea daltonii (strain DSM 22248 / JCM 15807 / FRC-32) (Geobacter daltonii).